We begin with the raw amino-acid sequence, 651 residues long: Zinc metalloproteinase nas-32 (651 aa).

The N-terminal stretch at 1–21 is a signal peptide; sequence MRRFFICYIGFLSIFLDFILA. Residues 22–202 constitute a propeptide that is removed on maturation; it reads DKDNNSEEER…EQSSKSRRKK (181 aa). N-linked (GlcNAc...) asparagine glycosylation is found at Asn-25, Asn-72, and Asn-251. In terms of domain architecture, Peptidase M12A spans 203 to 394; the sequence is RQIDNLAQFW…KMLNTHYSCS (192 aa). Disulfide bonds link Cys-245-Cys-393, Cys-264-Cys-283, Cys-395-Cys-412, Cys-415-Cys-426, Cys-434-Cys-467, and Cys-495-Cys-516. His-291 serves as a coordination point for Zn(2+). Residue Glu-292 is part of the active site. Residues His-295 and His-301 each contribute to the Zn(2+) site. Positions 380-433 constitute an EGF-like domain; sequence TFLDLKMLNTHYSCSCPTILSCGNGGFTNPANCSVCICPYGFGGALCTERTDYG. An N-linked (GlcNAc...) asparagine glycan is attached at Asn-411. One can recognise a CUB domain in the interval 434–554; sequence CGSTLTATDT…TTYTWSYRYV (121 aa). The N-linked (GlcNAc...) asparagine glycan is linked to Asn-453. Asn-557 carries N-linked (GlcNAc...) asparagine glycosylation. Intrachain disulfides connect Cys-610/Cys-647, Cys-619/Cys-640, and Cys-628/Cys-644. In terms of domain architecture, ShKT spans 610–647; sequence CKDRFPKSQCSTYSTNGMCTQQPPLAAEFSCAETCGFC.

Requires Zn(2+) as cofactor. In terms of tissue distribution, expressed in pharyngeal, anal depressor, intestinal and vulva muscles, head neurons and head mesodermal cell.

The protein localises to the secreted. Its function is as follows. Metalloprotease. In Caenorhabditis elegans, this protein is Zinc metalloproteinase nas-32 (nas-32).